Consider the following 100-residue polypeptide: MGRRRSDIYEAVRRVLNYPLEDRGDYSIVYRHRVEGVGEVLREARLESVARVDKWAVHLVNGDSIPLHRIVEIRGPRGETVWRRGLGWLEDLSSRRRTAD.

This sequence belongs to the UPF0248 family.

The protein is UPF0248 protein APE_0939 of Aeropyrum pernix (strain ATCC 700893 / DSM 11879 / JCM 9820 / NBRC 100138 / K1).